A 349-amino-acid chain; its full sequence is Isopentenyl-diphosphate delta-isomerase (349 aa).

A substrate-binding site is contributed by 6-7 (RK). Residues 62–64 (AMT), Ser-93, and Asn-122 contribute to the FMN site. Gln-152 serves as a coordination point for substrate. Glu-153 serves as a coordination point for Mg(2+). FMN is bound by residues Lys-184, Thr-214, 258–259 (GG), and 280–281 (AG).

The protein belongs to the IPP isomerase type 2 family. In terms of assembly, homooctamer. Dimer of tetramers. FMN serves as cofactor. The cofactor is NADPH. Requires Mg(2+) as cofactor.

It localises to the cytoplasm. The catalysed reaction is isopentenyl diphosphate = dimethylallyl diphosphate. Functionally, involved in the biosynthesis of isoprenoids. Catalyzes the 1,3-allylic rearrangement of the homoallylic substrate isopentenyl (IPP) to its allylic isomer, dimethylallyl diphosphate (DMAPP). This is Isopentenyl-diphosphate delta-isomerase from Bacillus cereus (strain ZK / E33L).